We begin with the raw amino-acid sequence, 357 residues long: Putative RING-H2 finger protein ATL37 (357 aa).

The first 31 residues, 1–31, serve as a signal peptide directing secretion; the sequence is MTIFTRDFSHRILACVLLPLFLFQCLPYVTC. Residues 47-67 form a helical membrane-spanning segment; that stretch reads SSIIGIVLLSLFLLLLVVYCL. The RING-type; atypical zinc-finger motif lies at 120-162; that stretch reads CAICLCEFEDEEPLRWMPPCSHTFHANCIDEWLSSRSTCPVCR. Residues 172-210 are disordered; that stretch reads SFPHPSMDVETGNAQRGVQESPDERSLTGSSVTCNNNAN. A compositionally biased stretch (polar residues) spans 198-210; the sequence is LTGSSVTCNNNAN. A Phosphoserine modification is found at Ser-273. 2 disordered regions span residues 281 to 304 and 327 to 357; these read RSSR…QGRQ and LDRD…PEKN. Residues 283–304 are compositionally biased toward polar residues; the sequence is SRQGYRSGSVGNERTGFSQGRQ. The segment covering 340–357 has biased composition (basic and acidic residues); that stretch reads NDKDFGERSFQRLMPEKN.

Belongs to the RING-type zinc finger family. ATL subfamily.

It is found in the membrane. It catalyses the reaction S-ubiquitinyl-[E2 ubiquitin-conjugating enzyme]-L-cysteine + [acceptor protein]-L-lysine = [E2 ubiquitin-conjugating enzyme]-L-cysteine + N(6)-ubiquitinyl-[acceptor protein]-L-lysine.. It participates in protein modification; protein ubiquitination. The protein is Putative RING-H2 finger protein ATL37 (ATL37) of Arabidopsis thaliana (Mouse-ear cress).